The sequence spans 196 residues: ATP-dependent Clp protease proteolytic subunit (196 aa).

Residue Ser98 is the Nucleophile of the active site. The active site involves His123.

The protein belongs to the peptidase S14 family. In terms of assembly, fourteen ClpP subunits assemble into 2 heptameric rings which stack back to back to give a disk-like structure with a central cavity, resembling the structure of eukaryotic proteasomes.

It localises to the cytoplasm. The enzyme catalyses Hydrolysis of proteins to small peptides in the presence of ATP and magnesium. alpha-casein is the usual test substrate. In the absence of ATP, only oligopeptides shorter than five residues are hydrolyzed (such as succinyl-Leu-Tyr-|-NHMec, and Leu-Tyr-Leu-|-Tyr-Trp, in which cleavage of the -Tyr-|-Leu- and -Tyr-|-Trp bonds also occurs).. Cleaves peptides in various proteins in a process that requires ATP hydrolysis. Has a chymotrypsin-like activity. Plays a major role in the degradation of misfolded proteins. In Sulfurimonas denitrificans (strain ATCC 33889 / DSM 1251) (Thiomicrospira denitrificans (strain ATCC 33889 / DSM 1251)), this protein is ATP-dependent Clp protease proteolytic subunit.